The chain runs to 289 residues: Melatonin receptor type 1B (289 aa).

Residues 1-2 are Cytoplasmic-facing; sequence GN. Residues 3–23 form a helical membrane-spanning segment; that stretch reads AFVVSLALADLVVALYPYPLV. Residues 24 to 41 are Extracellular-facing; it reads LLAIFHNGWTLGEMHCKV. Cysteine 39 and cysteine 116 are joined by a disulfide. The helical transmembrane segment at 42–62 threads the bilayer; it reads SGFVMGLSVIGSIFNITAIAI. Over 63-81 the chain is Cytoplasmic; the sequence is NRYCYICHSFAYDKVYSCW. A helical membrane pass occupies residues 82–102; sequence NTMLYVSLIWVLTVIATVPNF. Topologically, residues 103–126 are extracellular; the sequence is FVGSLKYDPRIYSCTFVQTASSYY. Residues 127 to 147 traverse the membrane as a helical segment; sequence TIAVVVIHFIVPITVVSFCYL. The Cytoplasmic portion of the chain corresponds to 148-179; the sequence is RIWVLVLQVRRRVKSETKPRLKPSDFRNFLTM. The helical transmembrane segment at 180 to 200 threads the bilayer; the sequence is FVVFVIFAFCWAPLNFIGLAV. The Extracellular portion of the chain corresponds to 201-213; it reads AINPSEMAPKVPE. The helical transmembrane segment at 214 to 234 threads the bilayer; sequence WLFIISYFMAYFNSCLNAIIY. Residues 235–289 lie on the Cytoplasmic side of the membrane; that stretch reads GLLNQNFRNEYKRILMSLWMPRLFFQDTSKGGTDGQKSKPSPALNNNDQMKTDTL. The disordered stretch occupies residues 264 to 289; the sequence is KGGTDGQKSKPSPALNNNDQMKTDTL.

It belongs to the G-protein coupled receptor 1 family. As to expression, brain and kidney, with trace levels in lungs.

Its subcellular location is the cell membrane. Functionally, high affinity receptor for melatonin. The activity of this receptor is mediated by pertussis toxin sensitive G proteins that inhibits adenylate cyclase activity. This is Melatonin receptor type 1B from Gallus gallus (Chicken).